Here is a 496-residue protein sequence, read N- to C-terminus: E3 ubiquitin-protein ligase Hakai (496 aa).

A disordered region spans residues 35 to 60 (PNKIKPAPRPQRNMNRIPTKPQPGFD). Residues 104–144 (CDKCGLPIKIYGRMIPCKHVFCYDCALMHEKKADKLCPGTL) form an RING-type; degenerate zinc finger. Residues 157–215 (CNDPVQRIEQCARGSLFMCSIVQGCKRTYLSQRDLQAHINHRHMRASKPTARPQPEPIH) form an HYB domain region. The C2H2-type zinc finger occupies 173-199 (FMCSIVQGCKRTYLSQRDLQAHINHRH). Residues 304 to 314 (VPIQDDSNSGA) show a composition bias toward polar residues. Positions 304–496 (VPIQDDSNSG…DQARYRPYYQ (193 aa)) are disordered. Composition is skewed to pro residues over residues 350–360 (APPPPPPPPIS), 380–397 (GPPPPMTTAPPPITPPPG), and 407–430 (MNHPPPGPPPQHGGPPVNAPPPHH). Residues 434–449 (SSMPQFNEDQGTLSPP) show a composition bias toward polar residues. A compositionally biased stretch (pro residues) spans 464 to 483 (PRGPPPRMQGPPSQAPMPGP).

Belongs to the Hakai family. In terms of assembly, homodimer. Interacts with tyrosine-phosphorylated SRC substrates. Component of the WMM complex, a N6-methyltransferase complex composed of a catalytic subcomplex, named MAC, and of an associated subcomplex, named MACOM. Component of the MACOM subcomplex.

Its subcellular location is the nucleus speckle. The protein resides in the nucleus. It localises to the nucleoplasm. It carries out the reaction S-ubiquitinyl-[E2 ubiquitin-conjugating enzyme]-L-cysteine + [acceptor protein]-L-lysine = [E2 ubiquitin-conjugating enzyme]-L-cysteine + N(6)-ubiquitinyl-[acceptor protein]-L-lysine.. It participates in protein modification; protein ubiquitination. In terms of biological role, E3 ubiquitin-protein ligase that mediates ubiquitination of several tyrosine-phosphorylated Src substrates. Associated component of the WMM complex, a complex that mediates N6-methyladenosine (m6A) methylation of RNAs, a modification that plays a role in the efficiency of mRNA splicing and RNA processing. The chain is E3 ubiquitin-protein ligase Hakai from Xenopus laevis (African clawed frog).